The sequence spans 218 residues: MGQKVHPIGMRVGIIRDWDAKWYAEKEYAEFLHEDLRIRKFIATKLADAAVSTIEIERAANRVNISIHTAKPGMVIGKGGSEVENLRKELNKLTGKRVHINIVEIKKPDLDAKLVGEGIARQLENRVAFRRAQKQAIQRAMRAGAKGIKTQVSGRLNGADIARSEGYSEGTVPLHTLRADIDYAWEEADTTYGKLGVKVWIYRGEILPTKKNTEKGGK.

A KH type-2 domain is found at 38 to 106 (IRKFIATKLA…RVHINIVEIK (69 aa)).

It belongs to the universal ribosomal protein uS3 family. Part of the 30S ribosomal subunit. Forms a tight complex with proteins S10 and S14.

Functionally, binds the lower part of the 30S subunit head. Binds mRNA in the 70S ribosome, positioning it for translation. The chain is Small ribosomal subunit protein uS3 from Enterococcus faecalis (strain ATCC 700802 / V583).